Reading from the N-terminus, the 472-residue chain is Homeobox protein PKNOX2 (472 aa).

Residues 1-62 (MMQHASPAPA…STPVPSAPID (62 aa)) are disordered. Positions 26-38 (DSPQMTATTQPPS) are enriched in polar residues. Residues 46-56 (SAPSAAASTPV) show a composition bias toward low complexity. In terms of domain architecture, MEIS N-terminal spans 96–179 (GSECITSASF…MHSDNLLRND (84 aa)). The segment at residues 291–350 (KRGVLPKHATNIMRSWLFQHLMHPYPTEDEKRQIAAQTNLTLLQVNNWFVNARRRILQPM) is a DNA-binding region (homeobox). Disordered stretches follow at residues 351–371 (LDAS…QHRP), 386–405 (QQQG…LDNL), and 423–472 (AAHD…DSLV). Residues 361 to 371 (KAKKIKSQHRP) are compositionally biased toward basic residues. Residues 396–405 (PDGSINLDNL) are compositionally biased toward polar residues. Over residues 429–454 (LDGTEEEDEDEMEEEEEEELEEEVDE) the composition is skewed to acidic residues.

Belongs to the TALE/MEIS homeobox family.

It localises to the nucleus. The polypeptide is Homeobox protein PKNOX2 (PKNOX2) (Pongo abelii (Sumatran orangutan)).